Reading from the N-terminus, the 614-residue chain is Spastin (614 aa).

A disordered region spans residues 1 to 45 (MNSPGGRGKKKGSGGPSSPVPPRPPPPCQARSRPAPKPAPPPQSP). Residues 1–50 (MNSPGGRGKKKGSGGPSSPVPPRPPPPCQARSRPAPKPAPPPQSPHKRNL) are required for nuclear localization. Residues 1 to 56 (MNSPGGRGKKKGSGGPSSPVPPRPPPPCQARSRPAPKPAPPPQSPHKRNLYYFSYP) lie on the Cytoplasmic side of the membrane. Positions 1-80 (MNSPGGRGKK…LGLLFVWLCQ (80 aa)) are required for interaction with ATL1. The required for midbody localization stretch occupies residues 1 to 192 (MNSPGGRGKK…LVMAKDRLQL (192 aa)). The required for interaction with RTN1 stretch occupies residues 1–298 (MNSPGGRGKK…STPKTNRTNK (298 aa)). The short motif at 4–11 (PGGRGKKK) is the Nuclear localization signal element. Composition is skewed to pro residues over residues 18-28 (SPVPPRPPPPC) and 35-44 (APKPAPPPQS). The required for interaction with SSNA1 and microtubules stretch occupies residues 50–87 (LYYFSYPLFLGFALLRLVAFHLGLLFVWLCQRFSRALM). Residues 57–77 (LFLGFALLRLVAFHLGLLFVW) constitute an intramembrane region (helical). A Nuclear export signal motif is present at residues 59-67 (LGFALLRLV). Residues 78-614 (LCQRFSRALM…WNKDFGDTTV (537 aa)) lie on the Cytoplasmic side of the membrane. Residues 110–194 (EAERVRAFHK…MAKDRLQLLE (85 aa)) form a sufficient for interaction with CHMP1B region. The required for interaction with microtubules stretch occupies residues 112-198 (ERVRAFHKQA…RLQLLEKLQP (87 aa)). One can recognise an MIT domain in the interval 118–193 (HKQAFEYISV…VMAKDRLQLL (76 aa)). Positions 220–310 (NGHLQSESGA…TPTTAARKKK (91 aa)) are disordered. Residues 226–614 (ESGAVPKRKD…WNKDFGDTTV (389 aa)) form a sufficient for microtubule severing region. S243 and S266 each carry phosphoserine. The required for interaction with microtubules and microtubule severing stretch occupies residues 268–326 (SGLSMVSGVRQGPGSAAATHKSTPKTNRTNKPSTPTTAARKKKDLKNFRNVDSNLANLI). A compositionally biased stretch (polar residues) spans 287–304 (HKSTPKTNRTNKPSTPTT). T304 is modified (phosphothreonine). The short motif at 307–310 (RKKK) is the Nuclear localization signal element. 380-387 (GPPGNGKT) lines the ATP pocket. Position 595 is a phosphoserine (S595).

It belongs to the AAA ATPase family. Spastin subfamily. In terms of assembly, homohexamer. Mostly monomeric, but assembles into hexameric structure for short periods of time. Oligomerization seems to be a prerequisite for catalytic activity. Binding to ATP in a cleft between two adjacent subunits stabilizes the homohexameric form. Binds to microtubules at least in part via the alpha-tubulin and beta-tubulin tails. The hexamer adopts a ring conformation through which microtubules pass prior to being severed. Does not interact strongly with tubulin heterodimers. Interacts (via MIT domain) with CHMP1B; the interaction is direct. Interacts with SSNA1. Interacts with ATL1. Interacts with RTN1. Interacts with ZFYVE27. Interacts with REEP1. Interacts (via MIT domain) with IST1.

It is found in the membrane. It localises to the endoplasmic reticulum. The protein localises to the midbody. The protein resides in the cytoplasm. Its subcellular location is the cytoskeleton. It is found in the microtubule organizing center. It localises to the centrosome. The protein localises to the perinuclear region. The protein resides in the nucleus. Its subcellular location is the spindle. It is found in the cell projection. It localises to the axon. It catalyses the reaction n ATP + n H2O + a microtubule = n ADP + n phosphate + (n+1) alpha/beta tubulin heterodimers.. With respect to regulation, allosteric enzyme with a cooperative mechanism; at least two neighbor subunits influence each other strongly in spastin hexamers. Microtubule binding promotes cooperative interactions among spastin subunits. Its function is as follows. ATP-dependent microtubule severing protein that specifically recognizes and cuts microtubules that are polyglutamylated. Preferentially recognizes and acts on microtubules decorated with short polyglutamate tails: severing activity increases as the number of glutamates per tubulin rises from one to eight, but decreases beyond this glutamylation threshold. Severing activity is not dependent on tubulin acetylation or detyrosination. Microtubule severing promotes reorganization of cellular microtubule arrays and the release of microtubules from the centrosome following nucleation. It is critical for the biogenesis and maintenance of complex microtubule arrays in axons, spindles and cilia. SPAST is involved in abscission step of cytokinesis and nuclear envelope reassembly during anaphase in cooperation with the ESCRT-III complex. Recruited at the midbody, probably by IST1, and participates in membrane fission during abscission together with the ESCRT-III complex. Recruited to the nuclear membrane by IST1 and mediates microtubule severing, promoting nuclear envelope sealing and mitotic spindle disassembly during late anaphase. Required for membrane traffic from the endoplasmic reticulum (ER) to the Golgi and endosome recycling. Recruited by IST1 to endosomes and regulates early endosomal tubulation and recycling by mediating microtubule severing. Probably plays a role in axon growth and the formation of axonal branches. This Bos taurus (Bovine) protein is Spastin.